The chain runs to 184 residues: MIQRLQNLYLTKVQTTLTEQFQYKNTHEIPRLEKIVINRGVGSASQNTKLLESLADELTILAGQRPIVKRAKKAIAGFGVREDMPIGLTVTLRGERMYAFYDRLVNLALPRIRDFQGISPKNFDGHGNYTLGLTEQLMFPEVSYEQIDQVCGMDISIVTTASTDREGHGLLKELGMPFKAGSVN.

Belongs to the universal ribosomal protein uL5 family. In terms of assembly, part of the 50S ribosomal subunit; contacts the 5S rRNA.

The protein resides in the plastid. It localises to the chloroplast. Functionally, binds 5S rRNA, forms part of the central protuberance of the 50S subunit. In Ostreococcus tauri, this protein is Large ribosomal subunit protein uL5c (rpl5).